A 411-amino-acid polypeptide reads, in one-letter code: Dual specificity protein phosphatase Mpk3 (411 aa).

The region spanning 22-149 (DSKDLILLDC…FRQAFPEWCE (128 aa)) is the Rhodanese domain. Residues 184–197 (DSACSSSAESSDCE) are compositionally biased toward low complexity. The interval 184–209 (DSACSSSAESSDCESSSHHHHHHSHH) is disordered. In terms of domain architecture, Tyrosine-protein phosphatase spans 214 to 358 (APVEIIPGLL…LLSFESQLRL (145 aa)). Cysteine 302 serves as the catalytic Phosphocysteine intermediate.

It belongs to the protein-tyrosine phosphatase family. Non-receptor class dual specificity subfamily. Interacts (via N-terminal region) with phosphorylated rl. In terms of tissue distribution, ubiquitous expression in eye and wing imaginal disks. Enriched in ovary.

The protein localises to the cytoplasm. It carries out the reaction O-phospho-L-tyrosyl-[protein] + H2O = L-tyrosyl-[protein] + phosphate. The catalysed reaction is O-phospho-L-seryl-[protein] + H2O = L-seryl-[protein] + phosphate. It catalyses the reaction O-phospho-L-threonyl-[protein] + H2O = L-threonyl-[protein] + phosphate. Activity abolished by tyrosine phosphatase inhibitor sodium vanadate. Activated by rl. Its function is as follows. Negatively regulates the activity of members of the MAP kinase family in response to changes in the cellular environment. Has a specificity for the ERK family. Acts as a negative regulator in a variety of developmental processes including cell differentiation and proliferation controlled by the Ras/ERK pathway. Suppresses the photoreceptor cell differentiation and wing vein formation. Required for proper oogenesis and early embryogenesis. Functions autonomously in a subset of photoreceptor progenitor cells in eye imaginal disks. Also appears to be required in surrounding non-neuronal cells for ommatidial patterning and photoreceptor differentiation. Plays a role in the maintenance of epithelial integrity during tracheal development. The chain is Dual specificity protein phosphatase Mpk3 (Mkp3) from Drosophila melanogaster (Fruit fly).